The primary structure comprises 288 residues: 4-diphosphocytidyl-2-C-methyl-D-erythritol kinase (288 aa).

The active site involves K19. An ATP-binding site is contributed by 102–112; sequence PMGGGIGGGSS. The active site involves D144.

The protein belongs to the GHMP kinase family. IspE subfamily.

The catalysed reaction is 4-CDP-2-C-methyl-D-erythritol + ATP = 4-CDP-2-C-methyl-D-erythritol 2-phosphate + ADP + H(+). Its pathway is isoprenoid biosynthesis; isopentenyl diphosphate biosynthesis via DXP pathway; isopentenyl diphosphate from 1-deoxy-D-xylulose 5-phosphate: step 3/6. Catalyzes the phosphorylation of the position 2 hydroxy group of 4-diphosphocytidyl-2C-methyl-D-erythritol. The chain is 4-diphosphocytidyl-2-C-methyl-D-erythritol kinase from Pseudomonas savastanoi pv. phaseolicola (strain 1448A / Race 6) (Pseudomonas syringae pv. phaseolicola (strain 1448A / Race 6)).